Here is a 272-residue protein sequence, read N- to C-terminus: Deaminated glutathione amidase (272 aa).

The region spanning 1 to 253 is the CN hydrolase domain; the sequence is MKPYLAAALQ…PGLAIAEINP (253 aa). The active-site Proton acceptor is the E43. K115 acts as the Proton donor in catalysis. The active-site Nucleophile is C158.

This sequence belongs to the carbon-nitrogen hydrolase superfamily. NIT1/NIT2 family.

The catalysed reaction is N-(4-oxoglutaryl)-L-cysteinylglycine + H2O = L-cysteinylglycine + 2-oxoglutarate. Hydrolyzes deaminated glutathione (dGSH, 2-oxoglutaramate) to alpha-ketoglutarate (alpha-KG) and cysteinylglycine (specific activity 7.77 umol/min/mg), hydrolyzes alpha-ketoglutaramate (a-KGM, specific activity 2.13 umol/min/mg), has no activity on glutathione or L-glutamine. May function as a metabolite repair enzyme. The sequence is that of Deaminated glutathione amidase from Synechocystis sp. (strain PCC 6803 / GT-S).